Reading from the N-terminus, the 263-residue chain is Thymidylate synthase (263 aa).

Residues Arg-25 and 123-124 (RR) contribute to the dUMP site. Cys-143 serves as the catalytic Nucleophile. Residues 163 to 166 (RSGD), Asn-174, and 204 to 206 (HIY) each bind dUMP. Residue Asp-166 coordinates (6R)-5,10-methylene-5,6,7,8-tetrahydrofolate. Ser-262 serves as a coordination point for (6R)-5,10-methylene-5,6,7,8-tetrahydrofolate.

Belongs to the thymidylate synthase family. Bacterial-type ThyA subfamily. In terms of assembly, homodimer.

It is found in the cytoplasm. The catalysed reaction is dUMP + (6R)-5,10-methylene-5,6,7,8-tetrahydrofolate = 7,8-dihydrofolate + dTMP. It functions in the pathway pyrimidine metabolism; dTTP biosynthesis. In terms of biological role, catalyzes the reductive methylation of 2'-deoxyuridine-5'-monophosphate (dUMP) to 2'-deoxythymidine-5'-monophosphate (dTMP) while utilizing 5,10-methylenetetrahydrofolate (mTHF) as the methyl donor and reductant in the reaction, yielding dihydrofolate (DHF) as a by-product. This enzymatic reaction provides an intracellular de novo source of dTMP, an essential precursor for DNA biosynthesis. This Clostridium beijerinckii (strain ATCC 51743 / NCIMB 8052) (Clostridium acetobutylicum) protein is Thymidylate synthase.